The primary structure comprises 229 residues: Enolase-phosphatase E1 (229 aa).

Belongs to the HAD-like hydrolase superfamily. MasA/MtnC family. As to quaternary structure, monomer. Mg(2+) serves as cofactor.

The enzyme catalyses 5-methylsulfanyl-2,3-dioxopentyl phosphate + H2O = 1,2-dihydroxy-5-(methylsulfanyl)pent-1-en-3-one + phosphate. Its pathway is amino-acid biosynthesis; L-methionine biosynthesis via salvage pathway; L-methionine from S-methyl-5-thio-alpha-D-ribose 1-phosphate: step 3/6. It functions in the pathway amino-acid biosynthesis; L-methionine biosynthesis via salvage pathway; L-methionine from S-methyl-5-thio-alpha-D-ribose 1-phosphate: step 4/6. Its function is as follows. Bifunctional enzyme that catalyzes the enolization of 2,3-diketo-5-methylthiopentyl-1-phosphate (DK-MTP-1-P) into the intermediate 2-hydroxy-3-keto-5-methylthiopentenyl-1-phosphate (HK-MTPenyl-1-P), which is then dephosphorylated to form the acireductone 1,2-dihydroxy-3-keto-5-methylthiopentene (DHK-MTPene). The polypeptide is Enolase-phosphatase E1 (Enterobacter sp. (strain 638)).